The following is a 215-amino-acid chain: 3-demethoxyubiquinol 3-hydroxylase (215 aa).

E64, E94, H97, E146, E178, and H181 together coordinate Fe cation.

The protein belongs to the COQ7 family. Fe cation is required as a cofactor.

Its subcellular location is the cell membrane. The enzyme catalyses a 5-methoxy-2-methyl-3-(all-trans-polyprenyl)benzene-1,4-diol + AH2 + O2 = a 3-demethylubiquinol + A + H2O. The protein operates within cofactor biosynthesis; ubiquinone biosynthesis. In terms of biological role, catalyzes the hydroxylation of 2-nonaprenyl-3-methyl-6-methoxy-1,4-benzoquinol during ubiquinone biosynthesis. This chain is 3-demethoxyubiquinol 3-hydroxylase, found in Pseudomonas paraeruginosa (strain DSM 24068 / PA7) (Pseudomonas aeruginosa (strain PA7)).